The sequence spans 299 residues: Formamidopyrimidine-DNA glycosylase (299 aa).

The Schiff-base intermediate with DNA role is filled by proline 2. Residue glutamate 3 is the Proton donor of the active site. Lysine 58 functions as the Proton donor; for beta-elimination activity in the catalytic mechanism. Positions 106, 125, and 168 each coordinate DNA. The segment at 259 to 295 (RVYDRVGHACPTKGCTGRVGRIVQGGRSTFFCETCQV) adopts an FPG-type zinc-finger fold. Arginine 285 serves as the catalytic Proton donor; for delta-elimination activity.

Belongs to the FPG family. In terms of assembly, monomer. Zn(2+) serves as cofactor.

The catalysed reaction is Hydrolysis of DNA containing ring-opened 7-methylguanine residues, releasing 2,6-diamino-4-hydroxy-5-(N-methyl)formamidopyrimidine.. It carries out the reaction 2'-deoxyribonucleotide-(2'-deoxyribose 5'-phosphate)-2'-deoxyribonucleotide-DNA = a 3'-end 2'-deoxyribonucleotide-(2,3-dehydro-2,3-deoxyribose 5'-phosphate)-DNA + a 5'-end 5'-phospho-2'-deoxyribonucleoside-DNA + H(+). Its function is as follows. Involved in base excision repair of DNA damaged by oxidation or by mutagenic agents. Acts as a DNA glycosylase that recognizes and removes damaged bases. Has a preference for oxidized purines, such as 7,8-dihydro-8-oxoguanine (8-oxoG). Has AP (apurinic/apyrimidinic) lyase activity and introduces nicks in the DNA strand. Cleaves the DNA backbone by beta-delta elimination to generate a single-strand break at the site of the removed base with both 3'- and 5'-phosphates. This Methylorubrum extorquens (strain CM4 / NCIMB 13688) (Methylobacterium extorquens) protein is Formamidopyrimidine-DNA glycosylase.